The following is a 255-amino-acid chain: NAD(P)H-quinone oxidoreductase subunit K, chloroplastic (255 aa).

[4Fe-4S] cluster is bound by residues cysteine 47, cysteine 48, cysteine 112, and cysteine 143.

Belongs to the complex I 20 kDa subunit family. As to quaternary structure, NDH is composed of at least 16 different subunits, 5 of which are encoded in the nucleus. [4Fe-4S] cluster serves as cofactor.

Its subcellular location is the plastid. The protein localises to the chloroplast thylakoid membrane. The catalysed reaction is a plastoquinone + NADH + (n+1) H(+)(in) = a plastoquinol + NAD(+) + n H(+)(out). It catalyses the reaction a plastoquinone + NADPH + (n+1) H(+)(in) = a plastoquinol + NADP(+) + n H(+)(out). NDH shuttles electrons from NAD(P)H:plastoquinone, via FMN and iron-sulfur (Fe-S) centers, to quinones in the photosynthetic chain and possibly in a chloroplast respiratory chain. The immediate electron acceptor for the enzyme in this species is believed to be plastoquinone. Couples the redox reaction to proton translocation, and thus conserves the redox energy in a proton gradient. This Zygnema circumcarinatum (Green alga) protein is NAD(P)H-quinone oxidoreductase subunit K, chloroplastic.